Here is a 448-residue protein sequence, read N- to C-terminus: tRNA methyltransferase 10 homolog C (448 aa).

Residues M1 to R48 constitute a mitochondrion transit peptide. Residues R137–E165 adopt a coiled-coil conformation. The segment at R144–K167 is disordered. Residues Q190–G382 enclose the SAM-dependent MTase TRM10-type domain. Residues E429 to N448 form a disordered region.

The protein belongs to the class IV-like SAM-binding methyltransferase superfamily. TRM10 family. As to quaternary structure, component of mitochondrial ribonuclease P. Interacts with HSD17B10/MRPP2.

The protein resides in the mitochondrion matrix. The protein localises to the mitochondrion nucleoid. It carries out the reaction adenosine(9) in tRNA + S-adenosyl-L-methionine = N(1)-methyladenosine(9) in tRNA + S-adenosyl-L-homocysteine + H(+). The enzyme catalyses guanosine(9) in tRNA + S-adenosyl-L-methionine = N(1)-methylguanosine(9) in tRNA + S-adenosyl-L-homocysteine + H(+). The catalysed reaction is an adenosine in mRNA + S-adenosyl-L-methionine = an N(1)-methyladenosine in mRNA + S-adenosyl-L-homocysteine + H(+). Functionally, mitochondrial tRNA N(1)-methyltransferase involved in mitochondrial tRNA maturation. Component of mitochondrial ribonuclease P, which cleaves tRNA molecules in their 5'-ends. Together with hsd17b10/mrpp2, forms a subcomplex of the mitochondrial ribonuclease P, named MRPP1-MRPP2 subcomplex, which displays functions that are independent of the ribonuclease P activity. The MRPP1-MRPP2 subcomplex catalyzes the formation of N(1)-methylguanine and N(1)-methyladenine at position 9 (m1G9 and m1A9, respectively) in tRNAs; trmt10c/mrpp1 acting as the catalytic N(1)-methyltransferase subunit. The MRPP1-MRPP2 subcomplex also acts as a tRNA maturation platform: following 5'-end cleavage by the mitochondrial ribonuclease P complex, the MRPP1-MRPP2 subcomplex enhances the efficiency of 3'-processing catalyzed by ELAC2, retains the tRNA product after elac2 processing and presents the nascent tRNA to the mitochondrial CCA tRNA nucleotidyltransferase TRNT1 enzyme. In addition to tRNA N(1)-methyltransferase activity, trmt10c/mrpp1 also acts as a mRNA N(1)-methyltransferase by mediating methylation of adenosine residues at the N(1) position of MT-ND5 mRNA. The sequence is that of tRNA methyltransferase 10 homolog C from Xenopus tropicalis (Western clawed frog).